The sequence spans 254 residues: MLPFGLVAALLLAAGPRPSLGDEAIHCPPCSEEKLARCRPPVGCEELVREPGCGCCATCALGLGMPCGVYTPRCGSGMRCYPPRGVEKPLRTLMHGQGVCTELSEIEAIQESLQTSDKDESEHPNNSFNPCSAHDHRCLQKHMAKVRDRSKMKVVGTPREEPRPVPQGSCQSELHRALERLAASQSRTHEDLFIIPIPNCDRNGNFHPKQCHPALDGQRGKCWCVDRKTGVKLPGGLEPKGELDCHQLADSLQE.

An N-terminal signal peptide occupies residues 1 to 21 (MLPFGLVAALLLAAGPRPSLG). One can recognise an IGFBP N-terminal domain in the interval 23-103 (EAIHCPPCSE…MHGQGVCTEL (81 aa)). 6 disulfide bridges follow: cysteine 27-cysteine 53, cysteine 30-cysteine 55, cysteine 38-cysteine 56, cysteine 44-cysteine 59, cysteine 67-cysteine 80, and cysteine 74-cysteine 100. An N-linked (GlcNAc...) asparagine glycan is attached at asparagine 125. Cysteines 131 and 138 form a disulfide. Residues 149-169 (RSKMKVVGTPREEPRPVPQGS) form a disordered region. The 79-residue stretch at 167–245 (QGSCQSELHR…GLEPKGELDC (79 aa)) folds into the Thyroglobulin type-1 domain. 3 cysteine pairs are disulfide-bonded: cysteine 170–cysteine 200, cysteine 211–cysteine 222, and cysteine 224–cysteine 245. At serine 251 the chain carries Phosphoserine.

Binds IGF2 more than IGF1.

The protein localises to the secreted. Its function is as follows. IGF-binding proteins prolong the half-life of the IGFs and have been shown to either inhibit or stimulate the growth promoting effects of the IGFs on cell culture. They alter the interaction of IGFs with their cell surface receptors. This Rattus norvegicus (Rat) protein is Insulin-like growth factor-binding protein 4 (Igfbp4).